The following is a 147-amino-acid chain: Hemoglobin subunit epsilon (147 aa).

In terms of domain architecture, Globin spans 3–147 (HFTAEEKAAI…VAIALGHKYH (145 aa)). Residues serine 14 and serine 51 each carry the phosphoserine modification. Heme b is bound by residues histidine 64 and histidine 93.

The protein belongs to the globin family. Heterotetramer of two alpha chains and two epsilon chains in early embryonic hemoglobin Gower-2; two zeta chains and two epsilon chains in early embryonic hemoglobin Gower-1. In terms of tissue distribution, red blood cells.

In terms of biological role, the epsilon chain is a beta-type chain of early mammalian embryonic hemoglobin. This is Hemoglobin subunit epsilon (HBE1) from Alouatta belzebul (Red-handed howler monkey).